The primary structure comprises 545 residues: Membrane protein insertase YidC (545 aa).

The next 6 helical transmembrane spans lie at 10 to 30 (AIYLSLFFIGIFMIIDDIFFS), 319 to 339 (LLYFIQVPMQLIMQIFYNVIP), 341 to 361 (WGLSIMFLTIVVRILIFPLTF), 407 to 427 (LGGCFPILLQLPVFFALYGLV), 467 to 487 (ILPFIMMVTQLISTIISSNVS), and 502 to 522 (MPIMFFFILYDMPSGLLIYWI).

It belongs to the OXA1/ALB3/YidC family. Type 1 subfamily. Interacts with the Sec translocase complex via SecD. Specifically interacts with transmembrane segments of nascent integral membrane proteins during membrane integration.

Its subcellular location is the cell inner membrane. Its function is as follows. Required for the insertion and/or proper folding and/or complex formation of integral membrane proteins into the membrane. Involved in integration of membrane proteins that insert both dependently and independently of the Sec translocase complex, as well as at least some lipoproteins. Aids folding of multispanning membrane proteins. The protein is Membrane protein insertase YidC of Borrelia hermsii (strain HS1 / DAH).